The primary structure comprises 104 residues: Complex III assembly factor LYRM7 (104 aa).

Ser-60 carries the post-translational modification Phosphoserine.

Belongs to the complex I LYR family. Interacts with UQCRFS1.

Its subcellular location is the mitochondrion matrix. In terms of biological role, assembly factor required for Rieske Fe-S protein UQCRFS1 incorporation into the cytochrome b-c1 (CIII) complex. Functions as a chaperone, binding to this subunit within the mitochondrial matrix and stabilizing it prior to its translocation and insertion into the late CIII dimeric intermediate within the mitochondrial inner membrane. The sequence is that of Complex III assembly factor LYRM7 (Lyrm7) from Rattus norvegicus (Rat).